A 276-amino-acid polypeptide reads, in one-letter code: NH(3)-dependent NAD(+) synthetase (276 aa).

Residue 43–50 coordinates ATP; that stretch reads GISGGVDS. Asp49 provides a ligand contact to Mg(2+). Arg146 contacts deamido-NAD(+). Thr166 is a binding site for ATP. A Mg(2+)-binding site is contributed by Glu171. Residues Lys179 and Asp186 each coordinate deamido-NAD(+). Positions 195 and 217 each coordinate ATP. 266–267 contributes to the deamido-NAD(+) binding site; that stretch reads HK.

This sequence belongs to the NAD synthetase family. Homodimer.

The catalysed reaction is deamido-NAD(+) + NH4(+) + ATP = AMP + diphosphate + NAD(+) + H(+). It participates in cofactor biosynthesis; NAD(+) biosynthesis; NAD(+) from deamido-NAD(+) (ammonia route): step 1/1. Its function is as follows. Catalyzes the ATP-dependent amidation of deamido-NAD to form NAD. Uses ammonia as a nitrogen source. The sequence is that of NH(3)-dependent NAD(+) synthetase from Vibrio atlanticus (strain LGP32) (Vibrio splendidus (strain Mel32)).